The following is a 286-amino-acid chain: ATP synthase gamma chain (286 aa).

This sequence belongs to the ATPase gamma chain family. As to quaternary structure, F-type ATPases have 2 components, CF(1) - the catalytic core - and CF(0) - the membrane proton channel. CF(1) has five subunits: alpha(3), beta(3), gamma(1), delta(1), epsilon(1). CF(0) has three main subunits: a, b and c.

The protein resides in the cell inner membrane. Functionally, produces ATP from ADP in the presence of a proton gradient across the membrane. The gamma chain is believed to be important in regulating ATPase activity and the flow of protons through the CF(0) complex. This Christiangramia forsetii (strain DSM 17595 / CGMCC 1.15422 / KT0803) (Gramella forsetii) protein is ATP synthase gamma chain.